A 418-amino-acid polypeptide reads, in one-letter code: Tyrosine--tRNA ligase 1 (418 aa).

An L-tyrosine-binding site is contributed by Y34. Residues P39–H48 carry the 'HIGH' region motif. L-tyrosine-binding residues include Y169 and Q173. Residues K230–T234 carry the 'KMSKS' region motif. K233 contributes to the ATP binding site. The 67-residue stretch at T352–Y418 folds into the S4 RNA-binding domain.

The protein belongs to the class-I aminoacyl-tRNA synthetase family. TyrS type 1 subfamily. Homodimer.

Its subcellular location is the cytoplasm. It carries out the reaction tRNA(Tyr) + L-tyrosine + ATP = L-tyrosyl-tRNA(Tyr) + AMP + diphosphate + H(+). Functionally, catalyzes the attachment of tyrosine to tRNA(Tyr) in a two-step reaction: tyrosine is first activated by ATP to form Tyr-AMP and then transferred to the acceptor end of tRNA(Tyr). The polypeptide is Tyrosine--tRNA ligase 1 (Bacillus cereus (strain ATCC 14579 / DSM 31 / CCUG 7414 / JCM 2152 / NBRC 15305 / NCIMB 9373 / NCTC 2599 / NRRL B-3711)).